The following is a 206-amino-acid chain: Small ribosomal subunit protein uS4 (206 aa).

The S4 RNA-binding domain occupies 94-157 (RRLDNVVYRL…RSRTYFKNLV (64 aa)).

The protein belongs to the universal ribosomal protein uS4 family. As to quaternary structure, part of the 30S ribosomal subunit. Contacts protein S5. The interaction surface between S4 and S5 is involved in control of translational fidelity.

Functionally, one of the primary rRNA binding proteins, it binds directly to 16S rRNA where it nucleates assembly of the body of the 30S subunit. In terms of biological role, with S5 and S12 plays an important role in translational accuracy. This chain is Small ribosomal subunit protein uS4, found in Chloroflexus aurantiacus (strain ATCC 29364 / DSM 637 / Y-400-fl).